Reading from the N-terminus, the 247-residue chain is uncharacterized protein (247 aa).

This is an uncharacterized protein from Acanthamoeba polyphaga (Amoeba).